A 341-amino-acid polypeptide reads, in one-letter code: Inactive caspase-12 (341 aa).

The CARD domain occupies 1 to 92; it reads MADEKPSNGV…QLSSDISSDG (92 aa). Ser85 and Ser90 each carry phosphoserine. Catalysis depends on residues His172 and Cys220.

Belongs to the peptidase C14A family. Widely expressed, with highest levels in lung.

Functionally, may function as a negative regulator of inflammatory responses and innate immunity. May reduce cytokine release in response to bacterial lipopolysaccharide during infection. Reduces activation of NF-kappa-B in response to TNF. May lack protease activity. This is Inactive caspase-12 (CASP12) from Homo sapiens (Human).